We begin with the raw amino-acid sequence, 1217 residues long: DNA-directed RNA polymerase subunit beta' (1217 aa).

Positions 60, 62, 75, and 78 each coordinate Zn(2+). 3 residues coordinate Mg(2+): Asp449, Asp451, and Asp453. Zn(2+) contacts are provided by Cys821, Cys895, Cys902, and Cys905.

It belongs to the RNA polymerase beta' chain family. In terms of assembly, the RNAP catalytic core consists of 2 alpha, 1 beta, 1 beta' and 1 omega subunit. When a sigma factor is associated with the core the holoenzyme is formed, which can initiate transcription. Mg(2+) serves as cofactor. Zn(2+) is required as a cofactor.

The catalysed reaction is RNA(n) + a ribonucleoside 5'-triphosphate = RNA(n+1) + diphosphate. DNA-dependent RNA polymerase catalyzes the transcription of DNA into RNA using the four ribonucleoside triphosphates as substrates. The chain is DNA-directed RNA polymerase subunit beta' from Lactobacillus helveticus (strain DPC 4571).